The primary structure comprises 326 residues: MQLEQIVEQAESAIAAADSPTALDEVRVEYMGKKGQLTELLKGLGKLDPSERREAGQKINEAKQQVQTSINARKELLKAAELAQKLEAERIDVTLPGRHSAVGGVHPVTQTIRRIEQFFGDLGFSVKEGPEVEDGFHNFDALNIPANHPARADHDTFYFTPSTMLRTQTSGVQIRTMENEKPPLRIISPGRVYRNDYDQTHTPMFHQVEGLMVDTDVSFTQLKGILEDFLNHFFEESLTVRFRPSYFPFTEPSAEVDVMGKDGKWLEVLGCGMVHPNVLKAVGIDSEKYTGFAFGMGVERLTMLRYGVNDLRAFFENDLRFLKQFN.

Position 251 (Glu251) interacts with Mg(2+).

It belongs to the class-II aminoacyl-tRNA synthetase family. Phe-tRNA synthetase alpha subunit type 1 subfamily. As to quaternary structure, tetramer of two alpha and two beta subunits. Mg(2+) serves as cofactor.

The protein resides in the cytoplasm. The enzyme catalyses tRNA(Phe) + L-phenylalanine + ATP = L-phenylalanyl-tRNA(Phe) + AMP + diphosphate + H(+). In Idiomarina loihiensis (strain ATCC BAA-735 / DSM 15497 / L2-TR), this protein is Phenylalanine--tRNA ligase alpha subunit.